Here is a 489-residue protein sequence, read N- to C-terminus: Ribulose-1,5 bisphosphate carboxylase/oxygenase large subunit N-methyltransferase, chloroplastic (489 aa).

Residues 1-37 (MATIFSGGSVSPFLFHTNKGTSFTPKAPILHLKRSFS) constitute a chloroplast transit peptide. Residues 64 to 288 (EGVITAKTPV…AGEQVYIQYD (225 aa)) enclose the SET domain. S-adenosyl-L-methionine contacts are provided by residues 80-82 (EGL) and Arg222. Substrate-binding residues include Arg222, Arg226, and Asp239. 242-243 (NH) provides a ligand contact to S-adenosyl-L-methionine. Substrate is bound by residues Tyr254, Tyr287, and Tyr300.

Belongs to the class V-like SAM-binding methyltransferase superfamily. Plant protein-lysine LSMT methyltransferase family. Homotrimer. In terms of tissue distribution, highly expressed in leaf.

It is found in the plastid. The protein localises to the chloroplast. The enzyme catalyses L-lysyl-[ribulose-1,5-bisphosphate carboxylase] + 3 S-adenosyl-L-methionine = N(6),N(6),N(6)-trimethyl-L-lysyl-[ribulose-1,5-bisphosphate carboxylase] + 3 S-adenosyl-L-homocysteine + 3 H(+). It catalyses the reaction [fructose-bisphosphate aldolase]-L-lysine + 3 S-adenosyl-L-methionine = [fructose-bisphosphate aldolase]-N(6),N(6),N(6)-trimethyl-L-lysine + 3 S-adenosyl-L-homocysteine + 3 H(+). Methylates 'Lys-14' of the large subunit of RuBisCO. Can also use with lower efficiency chloroplastic fructose-bisphosphate aldolases and gamma-tocopherol methyltransferase as substrates, but not a cytosolic aldolase. This chain is Ribulose-1,5 bisphosphate carboxylase/oxygenase large subunit N-methyltransferase, chloroplastic (RBCMT), found in Pisum sativum (Garden pea).